Reading from the N-terminus, the 272-residue chain is Phosphate import ATP-binding protein PstB (272 aa).

The ABC transporter domain occupies 20–267; sequence VKKEVVYETN…PADQRTADYI (248 aa). An ATP-binding site is contributed by 58–65; the sequence is GPSGCGKS.

It belongs to the ABC transporter superfamily. Phosphate importer (TC 3.A.1.7) family. As to quaternary structure, the complex is composed of two ATP-binding proteins (PstB), two transmembrane proteins (PstC and PstA) and a solute-binding protein (PstS).

Its subcellular location is the cell membrane. The catalysed reaction is phosphate(out) + ATP + H2O = ADP + 2 phosphate(in) + H(+). Functionally, part of the ABC transporter complex PstSACB involved in phosphate import. Responsible for energy coupling to the transport system. This is Phosphate import ATP-binding protein PstB from Geobacillus kaustophilus (strain HTA426).